Consider the following 261-residue polypeptide: ATP synthase subunit a (261 aa).

A propeptide spans 1–14 (MSTLSFNNISTEVL) (removed in mature form). 7 helical membrane-spanning segments follow: residues 38 to 58 (ITNI…INLL), 96 to 116 (IYFP…LIGM), 126 to 146 (HFVV…ILGF), 153 to 173 (FFSL…LVLI), 191 to 211 (ANIL…YNIM), 214 to 234 (GIIF…FSGL), and 235 to 255 (ELGI…GYIK).

Belongs to the ATPase A chain family. In terms of assembly, F-type ATPases have 2 components, CF(1) - the catalytic core - and CF(0) - the membrane proton channel. CF(1) has five subunits: alpha(3), beta(3), gamma(1), delta(1), epsilon(1). CF(0) has three main subunits: a, b and c.

The protein resides in the mitochondrion inner membrane. In terms of biological role, mitochondrial membrane ATP synthase (F(1)F(0) ATP synthase or Complex V) produces ATP from ADP in the presence of a proton gradient across the membrane which is generated by electron transport complexes of the respiratory chain. F-type ATPases consist of two structural domains, F(1) - containing the extramembraneous catalytic core and F(0) - containing the membrane proton channel, linked together by a central stalk and a peripheral stalk. During catalysis, ATP synthesis in the catalytic domain of F(1) is coupled via a rotary mechanism of the central stalk subunits to proton translocation. Key component of the proton channel; it may play a direct role in the translocation of protons across the membrane. The protein is ATP synthase subunit a (atp-6) of Neurospora crassa (strain ATCC 24698 / 74-OR23-1A / CBS 708.71 / DSM 1257 / FGSC 987).